A 435-amino-acid polypeptide reads, in one-letter code: Zinc finger CCCH domain-containing protein 67 (435 aa).

Residues 1–91 (MSKPEETSDP…DQKEEEEGSE (91 aa)) form a disordered region. 3 C3H1-type zinc fingers span residues 101-129 (RPDS…HPVR), 148-176 (NPKL…HMKE), and 194-222 (RPGE…HPDP). The interval 235–274 (GNNGGSFSPKAPSQASSTSWSSTRHMNGTGTAPFIPSMFP) is disordered. The segment covering 247–256 (SQASSTSWSS) has biased composition (low complexity). C3H1-type zinc fingers lie at residues 334–362 (RPDQ…HPKN) and 380–408 (RPDQ…HSIP). The segment at 412–435 (SPSSSQTVEARQVGANGNEDDSWH) is disordered.

It localises to the nucleus. The chain is Zinc finger CCCH domain-containing protein 67 from Arabidopsis thaliana (Mouse-ear cress).